The chain runs to 77 residues: Conotoxin ArMKLT2-0122 (77 aa).

A signal peptide spans 1–22 (MKLTCVLIVAVLFLTACQLIAA). A propeptide spanning residues 23–44 (DDSRDLKRFSRRKMRDGMLNTK) is cleaved from the precursor. 3 disulfide bridges follow: Cys-50–Cys-65, Cys-57–Cys-68, and Cys-64–Cys-73.

It belongs to the conotoxin O1 superfamily. As to expression, expressed by the venom duct.

It localises to the secreted. This Conus arenatus (Sand-dusted cone) protein is Conotoxin ArMKLT2-0122.